Reading from the N-terminus, the 158-residue chain is Leptin-B (158 aa).

The first 19 residues, 1–19 (MYMPLALVYASFLTLPAST), serve as a signal peptide directing secretion. Cys114 and Cys158 are disulfide-bonded.

This sequence belongs to the leptin family. As to expression, highly expressed in the brain and eye. Expressed at low levels in muscle and skin.

It localises to the secreted. May function as part of a signaling pathway that acts to regulate the size of the body fat depot. The chain is Leptin-B from Oryzias latipes (Japanese rice fish).